The chain runs to 73 residues: MQKDLHPKAVPCKIIYQGQVVMETMSTRPEIHVDVWSGVHPFWTGEERFLDTEGRVDKFNKRFGDSYRRGSKK.

Belongs to the bacterial ribosomal protein bL31 family. Type A subfamily. Part of the 50S ribosomal subunit. Contacts protein L9.

Binds the 23S rRNA and interacts with the tRNA in the E site. In Deinococcus radiodurans (strain ATCC 13939 / DSM 20539 / JCM 16871 / CCUG 27074 / LMG 4051 / NBRC 15346 / NCIMB 9279 / VKM B-1422 / R1), this protein is Large ribosomal subunit protein bL31 (rpmE).